The primary structure comprises 235 residues: uncharacterized protein (235 aa).

2 disordered regions span residues 1–47 (MSHK…QSTN) and 78–128 (QEHH…KQPQ). Residues 20–33 (HPPGQSLSSISWSP) are compositionally biased toward polar residues. The span at 84 to 98 (QQQQQQRQNIRSQNS) shows a compositional bias: low complexity. Polar residues predominate over residues 106-128 (VQESQWTSSASNSSLKKQEKQPQ).

This is an uncharacterized protein from Saccharomyces cerevisiae (strain ATCC 204508 / S288c) (Baker's yeast).